The sequence spans 167 residues: MRRVVTLVSKEQAEVGHRFRVFSIPEECKDCRLYPVCMGRLAPGRSYKVVEVRPSMGQRCKITDGEMVPVVVEEAPVIGLLPLNKALEGVVVTFEEECAGCEGCPSDVVKKGEKIKVVKIVGRKRCRGREFAIVEFYVVSPPSPSGSSISATSQGPSRAPPSRRLLK.

A disordered region spans residues 142-167 (PSPSGSSISATSQGPSRAPPSRRLLK). Residues 145–157 (SGSSISATSQGPS) show a composition bias toward low complexity.

The protein belongs to the UPF0179 family.

This Pyrobaculum aerophilum (strain ATCC 51768 / DSM 7523 / JCM 9630 / CIP 104966 / NBRC 100827 / IM2) protein is UPF0179 protein PAE0681.